The chain runs to 287 residues: Immunoglobulin alpha Fc receptor (287 aa).

An N-terminal signal peptide occupies residues 1 to 21 (MDPKQTTLLCLVLCLGQRIQA). At 22–227 (QEGDFPMPFI…SIHQDYTTQN (206 aa)) the chain is on the extracellular side. Ig-like C2-type domains lie at 42 to 107 (DGSV…IGHY) and 139 to 200 (GENI…YNRS). Cys-49 and Cys-100 form a disulfide bridge. N-linked (GlcNAc...) asparagine glycosylation is found at Asn-65, Asn-79, Asn-141, Asn-177, and Asn-186. An intrachain disulfide couples Cys-146 to Cys-193. A helical membrane pass occupies residues 228 to 246 (LIRMAVAGLVLVALLAILV). At 247–287 (ENWHSHTALNKEASADVAEPSWSQQMCQPGLTFARTPSVCK) the chain is on the cytoplasmic side.

Associates with the Fc epsilon RI gamma 2 receptor inducing tyrosine phosphorylation of gamma 2. As to quaternary structure, (Microbial infection) Interacts with Staphylococcus aureus protein SSL11. Isoform A.1, isoform A.2 and isoform A.3 are differentially expressed between blood and mucosal myeloid cells. Isoform A.1, isoform A.2 and isoform A.3 are expressed in monocytes. Isoform A.1 and isoform A.2 are expressed in alveolar macrophages; however only one isoform is expressed at alveolar macrophages surfaces.

It is found in the cell membrane. It localises to the secreted. Functionally, binds to the Fc region of immunoglobulins alpha. Mediates several functions including cytokine production. This Homo sapiens (Human) protein is Immunoglobulin alpha Fc receptor (FCAR).